The following is a 407-amino-acid chain: MSADSADSVPSPRSAFATTLQIVSVVSFTFICYLTIGLPLAVLPGFVHDELGFSAIVAGAAISVQYFATLASRPLAGRCADTLGPKRTVLRGLAACGASGALLLSAFAFARWPAASIGLLVASRLVLGIGESLVGTGAILWGIGRVGTAHNARVISWNGIATYGALAIGAPVGVAISHALIPAVLGMLVIALAALGYYLARLITPVPLVHGERMSYASVLTRVLPHGLGLALGSAGFGSIATFITLYYAARHWPNAALSLTVFGTLFIGARLLFANTIKTHGGFRVAIVSFAFECAGLLMLWLAPVPHVALVGAALTGFGFALIFPALGVEAVALVPPASRGAALSAYSVFLDLSLGITGPLAGYVAGAFGYPQVFLCAAVAAAAGVALSTVLYQRQARLSGSGAAA.

12 helical membrane passes run 22 to 42 (IVSV…PLAV), 51 to 71 (LGFS…ATLA), 101 to 121 (ALLL…GLLV), 126 to 146 (VLGI…IGRV), 154 to 174 (VISW…PVGV), 179 to 199 (ALIP…GYYL), 227 to 247 (GLGL…ITLY), 258 to 278 (LSLT…ANTI), 286 to 306 (VAIV…LAPV), 309 to 329 (VALV…PALG), 347 to 367 (AYSV…GYVA), and 369 to 389 (AFGY…GVAL).

This sequence belongs to the major facilitator superfamily. YhhS family.

The protein resides in the cell inner membrane. This is an uncharacterized protein from Burkholderia mallei (strain NCTC 10229).